A 145-amino-acid polypeptide reads, in one-letter code: Enhancer of mRNA-decapping protein 2 (145 aa).

Disordered stretches follow at residues 1 to 74 and 89 to 115; these read MGSE…DKAT and PKKK…IDSK. Polar residues predominate over residues 29–42; it reads TKTQILVPPTQSLP. A compositionally biased stretch (basic and acidic residues) spans 55–73; it reads QRREPRERTSKTGHEDDKA. Positions 89–102 are enriched in basic residues; the sequence is PKKKSCKYKKKKTR.

This sequence belongs to the EDC family.

It is found in the cytoplasm. The protein localises to the nucleus. Functionally, mRNA-binding protein which stimulates mRNA decapping by DCP1 and DCP2. The polypeptide is Enhancer of mRNA-decapping protein 2 (EDC2) (Saccharomyces cerevisiae (strain ATCC 204508 / S288c) (Baker's yeast)).